The sequence spans 111 residues: Protein RnfH (111 aa).

Positions 88-111 (RRRRVQKTRESGTREGQKWLRGGA) are disordered. Residues 94–105 (KTRESGTREGQK) are compositionally biased toward basic and acidic residues.

This sequence belongs to the UPF0125 (RnfH) family.

In Cupriavidus pinatubonensis (strain JMP 134 / LMG 1197) (Cupriavidus necator (strain JMP 134)), this protein is Protein RnfH.